The primary structure comprises 497 residues: Glutamate--tRNA ligase (497 aa).

The 'HIGH' region motif lies at 13–23 (PSPTGTPHVGM). A 'KMSKS' region motif is present at residues 257–261 (KLSKR). An ATP-binding site is contributed by K260.

It belongs to the class-I aminoacyl-tRNA synthetase family. Glutamate--tRNA ligase type 1 subfamily. In terms of assembly, monomer.

It is found in the cytoplasm. It catalyses the reaction tRNA(Glu) + L-glutamate + ATP = L-glutamyl-tRNA(Glu) + AMP + diphosphate. Functionally, catalyzes the attachment of glutamate to tRNA(Glu) in a two-step reaction: glutamate is first activated by ATP to form Glu-AMP and then transferred to the acceptor end of tRNA(Glu). This is Glutamate--tRNA ligase from Corynebacterium diphtheriae (strain ATCC 700971 / NCTC 13129 / Biotype gravis).